Reading from the N-terminus, the 256-residue chain is MGKPIQKTDGSTPQRPLICAPLVGKTKAALIEEIDAVAAKKPDLLEWRVDFYKHIGKTEDVLETASLLKAHSKGIPILFTRRSIREGGEPITVSEQEVTALYEQVMKLGLVDVVDVELSCPEAEKERLRAIAKETETQWILSYHDFQRTPSEADILAKLQEAEANGADVGKVAVMPETMADVLTLMQATQKAASTLTIPVITMAMGRLGTLSRMAGGACGSALTFAIANESSAPGQMPIDELRSVLDVIDRYVTGQ.

3-dehydroquinate-binding positions include 46–48 and arginine 82; that span reads EWR. Residue histidine 144 is the Proton donor/acceptor of the active site. Lysine 171 functions as the Schiff-base intermediate with substrate in the catalytic mechanism. Positions 213, 232, and 236 each coordinate 3-dehydroquinate.

Belongs to the type-I 3-dehydroquinase family. Homodimer.

The catalysed reaction is 3-dehydroquinate = 3-dehydroshikimate + H2O. It participates in metabolic intermediate biosynthesis; chorismate biosynthesis; chorismate from D-erythrose 4-phosphate and phosphoenolpyruvate: step 3/7. In terms of biological role, involved in the third step of the chorismate pathway, which leads to the biosynthesis of aromatic amino acids. Catalyzes the cis-dehydration of 3-dehydroquinate (DHQ) and introduces the first double bond of the aromatic ring to yield 3-dehydroshikimate. This Shouchella clausii (strain KSM-K16) (Alkalihalobacillus clausii) protein is 3-dehydroquinate dehydratase.